Here is a 473-residue protein sequence, read N- to C-terminus: H(+)/Cl(-) exchange transporter ClcA (473 aa).

The Cytoplasmic portion of the chain corresponds to 1-32 (MKTDTPSLETPQAARLRRRQLIRQLLERDKTP). A helical transmembrane segment spans residues 33 to 69 (LAILFMAAVVGTLVGLAAVAFDKGVAWLQNQRMGALV). Residues 70–76 (HTADNYP) are Periplasmic-facing. A helical transmembrane segment spans residues 77–100 (LLLTVAFLCSAVLAMFGYFLVRKY). Residues 106-110 (GSGIP) carry the Selectivity filter part_1 motif. Ser107 contributes to the chloride binding site. Residues 109–116 (IPEIEGAL) constitute an intramembrane region (helical). The Cytoplasmic portion of the chain corresponds to 117–123 (EDQRPVR). Transmembrane regions (helical) follow at residues 124–141 (WWRVLPVKFFGGLGTLGG) and 148–166 (EGPTVQIGGNIGRMVLDVF). Residues 146–150 (GREGP) carry the Selectivity filter part_2 motif. Residues 167–176 (RLKGDEARHT) are Cytoplasmic-facing. Intramembrane regions (helical) lie at residues 177–189 (LLATGAAAGLAAA) and 193–201 (PLAGILFII). The Cytoplasmic portion of the chain corresponds to 202–214 (EEMRPQFRYTLIS). The helical transmembrane segment at 215 to 232 (IKAVFIGVIMSTIMYRIF) threads the bilayer. Residues 233 to 252 (NHEVALIDVGKLSDAPLNTL) are Periplasmic-facing. A helical membrane pass occupies residues 253–281 (WLYLILGIIFGIFGPIFNKWVLGMQDLLH). Topologically, residues 282 to 287 (RVHGGN) are cytoplasmic. Residues 288–309 (ITKWVLMGGAIGGLCGLLGFVA) form a helical membrane-spanning segment. Over 310-329 (PATSGGGFNLIPIATAGNFS) the chain is Periplasmic. The next 2 helical transmembrane spans lie at 330–349 (MGMLVFIFVARVITTLLCFS) and 355–376 (GIFAPMLALGTVLGTAFGMVAV). Positions 355–359 (GIFAP) match the Selectivity filter part_3 motif. The chloride site is built by Ile356 and Phe357. Topologically, residues 377-386 (ELFPQYHLEA) are periplasmic. The helical intramembrane region spans 387–401 (GTFAIAGMGALLAAS). Residues 402–404 (IRA) constitute an intramembrane region (note=Loop between two helices). Positions 405-416 (PLTGIILVLEMT) form an intramembrane region, helical. Positions 417–421 (DNYQL) form an intramembrane region, note=Loop between two helices. Residues 422–438 (ILPMIITGLGATLLAQF) traverse the membrane as a helical segment. At 439–473 (TGGKPLYSAILARTLAKQEAEQLARSKAASASENT) the chain is on the cytoplasmic side. Residue Tyr445 coordinates chloride.

It belongs to the chloride channel (TC 2.A.49) family. ClcA subfamily. Homodimer.

It is found in the cell inner membrane. It catalyses the reaction 2 chloride(in) + H(+)(out) = 2 chloride(out) + H(+)(in). Functionally, proton-coupled chloride transporter. Functions as antiport system and exchanges two chloride ions for 1 proton. Probably acts as an electrical shunt for an outwardly-directed proton pump that is linked to amino acid decarboxylation, as part of the extreme acid resistance (XAR) response. The chain is H(+)/Cl(-) exchange transporter ClcA from Escherichia coli O157:H7.